The following is a 233-amino-acid chain: uncharacterized protein (233 aa).

Residues 190–233 form a disordered region; the sequence is LNTSLSEDDTESIVETDYSEEEKESISETESSSDDESYSLYDSF. Positions 195-212 are enriched in acidic residues; the sequence is SEDDTESIVETDYSEEEK.

Belongs to the asfivirus DP238L family.

This is an uncharacterized protein from Ornithodoros (relapsing fever ticks).